The primary structure comprises 142 residues: Large ribosomal subunit protein uL11 (142 aa).

Belongs to the universal ribosomal protein uL11 family. As to quaternary structure, part of the ribosomal stalk of the 50S ribosomal subunit. Interacts with L10 and the large rRNA to form the base of the stalk. L10 forms an elongated spine to which L12 dimers bind in a sequential fashion forming a multimeric L10(L12)X complex. In terms of processing, one or more lysine residues are methylated.

Functionally, forms part of the ribosomal stalk which helps the ribosome interact with GTP-bound translation factors. The chain is Large ribosomal subunit protein uL11 from Xanthomonas oryzae pv. oryzae (strain MAFF 311018).